A 279-amino-acid polypeptide reads, in one-letter code: MVSFRFPFSFSQPPRATTSFSGFSISAVAVSVTVGAAAAGAAIAASRNPSHPILEWAFSSHRSSLSPWGSITLADESVVEPKTGFSFPASIGDSRRLLGVGLRKKSLLGLKNIDVYAFGVYADCDDVKKLVGDKYANLPASEIRGNKSFMDDLMEADIKMTIRLQIVYGKLNIRSVRNAFQESVGNRLKKFGGSDNDELLQSFTSLFKDEYKIPRNSTIDLTKDPGHVLSVAIEGNHVGSVKSHLLCRSILDLYIGEEPFDKNAREDFLDNAASLAFDN.

Dodecanoate contacts are provided by Arg103, Tyr116, and Ser183.

The protein belongs to the chalcone isomerase family. Expressed in developing cotyledons, young seedlings, roots, seeds, embryos, macrospores, preanthesis and tapetum. Restricted to developing and reproductive tissues.

It localises to the plastid. It is found in the chloroplast stroma. In terms of biological role, fatty-acid-binding protein. Interacts preferentially with saturated fatty acid. May be involved in alpha-linolenic (C18:3) metabolism. In Arabidopsis thaliana (Mouse-ear cress), this protein is Fatty-acid-binding protein 1 (FAP1).